Reading from the N-terminus, the 294-residue chain is S-adenosylmethionine uptake transporter (294 aa).

Transmembrane regions (helical) follow at residues 4–24 (ALKT…SSSA), 39–59 (FEVA…FVFY), 74–91 (ILRG…TYGL), 98–118 (TATV…VFFL), 121–141 (NIIW…VVTL), 148–168 (FNPE…LDII), 177–197 (SMIS…LPVA), 207–227 (FELA…FFLL), 237–257 (ATAP…YFIF), and 260–280 (FPDK…LFII). EamA domains are found at residues 21-141 (SSSA…VVTL) and 160-280 (ISFA…LFII).

This sequence belongs to the drug/metabolite transporter (DMT) superfamily. 10 TMS drug/metabolite exporter (DME) (TC 2.A.7.3) family.

Its subcellular location is the cell inner membrane. Transports S-adenosylmethionine. In Rickettsia felis (strain ATCC VR-1525 / URRWXCal2) (Rickettsia azadi), this protein is S-adenosylmethionine uptake transporter (sam).